Reading from the N-terminus, the 216-residue chain is Protein-L-isoaspartate O-methyltransferase (216 aa).

Residue Ser-61 is part of the active site.

It belongs to the methyltransferase superfamily. L-isoaspartyl/D-aspartyl protein methyltransferase family.

It localises to the cytoplasm. It catalyses the reaction [protein]-L-isoaspartate + S-adenosyl-L-methionine = [protein]-L-isoaspartate alpha-methyl ester + S-adenosyl-L-homocysteine. Its function is as follows. Catalyzes the methyl esterification of L-isoaspartyl residues in peptides and proteins that result from spontaneous decomposition of normal L-aspartyl and L-asparaginyl residues. It plays a role in the repair and/or degradation of damaged proteins. The polypeptide is Protein-L-isoaspartate O-methyltransferase (Geobacter metallireducens (strain ATCC 53774 / DSM 7210 / GS-15)).